Consider the following 275-residue polypeptide: uncharacterized protein (275 aa).

A compositionally biased stretch (polar residues) spans 148-158; sequence TFPTTAPSITP. A disordered region spans residues 148–173; sequence TFPTTAPSITPGNKEGEKTTSTDTDE. A helical membrane pass occupies residues 187–207; the sequence is ILIAVTLLLSGVAIIVFVIFE. Positions 234–264 are disordered; the sequence is GQPPGTAESKPDSQPQKVGQDAANSSNPKKA. Residues 245 to 261 show a composition bias toward polar residues; sequence DSQPQKVGQDAANSSNP.

The protein localises to the membrane. This is an uncharacterized protein from Homo sapiens (Human).